A 358-amino-acid chain; its full sequence is Protein phosphatase 1 regulatory subunit 3G (358 aa).

The interval 1 to 71 (MEPIGARLSL…KEEAAPQEQE (71 aa)) is disordered. Residues 11–29 (EAPGPAPFREAPPAEELPA) are compositionally biased toward low complexity. Position 86 is a phosphoserine (Ser86). The CBM21 domain occupies 210–350 (AERLQRQRVC…NNAGANYTLR (141 aa)). Residues 270–280 (EPLEPQQPEAP) show a composition bias toward low complexity. The tract at residues 270–295 (EPLEPQQPEAPSGASEPGSGDAKKEP) is disordered.

Functionally, glycogen-targeting subunit for protein phosphatase 1 (PP1). Involved in the regulation of hepatic glycogenesis in a manner coupled to the fasting-feeding cycle and distinct from other glycogen-targeting subunits. The chain is Protein phosphatase 1 regulatory subunit 3G (PPP1R3G) from Homo sapiens (Human).